A 201-amino-acid polypeptide reads, in one-letter code: Translation initiation factor IF-3 (201 aa).

The interval Pro-167–Asn-201 is disordered. Residues Arg-169 to Arg-178 show a composition bias toward basic residues.

Belongs to the IF-3 family. In terms of assembly, monomer.

It is found in the cytoplasm. Its function is as follows. IF-3 binds to the 30S ribosomal subunit and shifts the equilibrium between 70S ribosomes and their 50S and 30S subunits in favor of the free subunits, thus enhancing the availability of 30S subunits on which protein synthesis initiation begins. The protein is Translation initiation factor IF-3 of Mycobacterium bovis (strain ATCC BAA-935 / AF2122/97).